A 429-amino-acid chain; its full sequence is Zinc finger protein 385C (429 aa).

The Matrin-type 1 zinc finger occupies 77 to 107 (ISCNICHLRFNSANQAEAHYKGHRHARKLKA). 3 disordered regions span residues 109-224 (EAAK…GRGE), 258-295 (GHQGAPRRGRGRPVSRGGTGHKTKRVIGNRGGRQGPSP), and 311-340 (QLKQHMSSRRHKDRLAGKPPKSSSQHNKLQ). The span at 125–146 (TVVSSASPPASGSPGTPQSKGP) shows a compositional bias: low complexity. Residues 147-162 (ASPPLGPSLQLPPTPD) are compositionally biased toward pro residues. A compositionally biased stretch (low complexity) spans 181–193 (CDAAASSSSSSCP). The Matrin-type 2 zinc finger occupies 225-259 (KGRLYCPTCKVTVNSASQLQAHNTGAKHRWMVEGH). Residues 262–284 (APRRGRGRPVSRGGTGHKTKRVI) are compositionally biased toward basic residues. Residues 297–327 (FHCALCQLHVNSETQLKQHMSSRRHKDRLAG) form a Matrin-type 3 zinc finger.

The protein localises to the nucleus. In Mus musculus (Mouse), this protein is Zinc finger protein 385C.